A 115-amino-acid chain; its full sequence is Large ribosomal subunit protein P2 (115 aa).

N-acetylmethionine is present on Met-1. A phosphoserine mark is found at Ser-17 and Ser-19. Lys-21 carries the N6-acetyllysine; alternate modification. Lys-21 carries the post-translational modification N6-succinyllysine; alternate. The span at 78-90 shows a compositional bias: low complexity; the sequence is GSAAPAAGSAPAA. Positions 78 to 115 are disordered; it reads GSAAPAAGSAPAAAEEKKDEKKEESEESDDDMGFGLFD. Phosphoserine is present on residues Ser-79 and Ser-86. Positions 91 to 101 are enriched in basic and acidic residues; it reads AEEKKDEKKEE. Ser-102 and Ser-105 each carry phosphoserine.

It belongs to the eukaryotic ribosomal protein P1/P2 family. Heterodimer with P1 at the lateral ribosomal stalk of the large ribosomal subunit.

Its function is as follows. Plays an important role in the elongation step of protein synthesis. The chain is Large ribosomal subunit protein P2 (RPLP2) from Homo sapiens (Human).